Here is a 163-residue protein sequence, read N- to C-terminus: Nucleotide-binding protein YajQ (163 aa).

The protein belongs to the YajQ family.

Functionally, nucleotide-binding protein. The sequence is that of Nucleotide-binding protein YajQ from Escherichia coli O127:H6 (strain E2348/69 / EPEC).